We begin with the raw amino-acid sequence, 483 residues long: Replication factor C large subunit (483 aa).

43 to 50 (GKPGIGKT) contacts ATP. Over residues 417-442 (ELKKKKKEEDAKGKKARGSKKEKEPI) the composition is skewed to basic and acidic residues. Residues 417–483 (ELKKKKKEED…KSSQSTLFSF (67 aa)) form a disordered region. Residues 448 to 457 (SIDSFSSQEP) show a composition bias toward polar residues.

Belongs to the activator 1 small subunits family. RfcL subfamily. As to quaternary structure, heteromultimer composed of small subunits (RfcS) and large subunits (RfcL).

Part of the RFC clamp loader complex which loads the PCNA sliding clamp onto DNA. In Methanospirillum hungatei JF-1 (strain ATCC 27890 / DSM 864 / NBRC 100397 / JF-1), this protein is Replication factor C large subunit.